We begin with the raw amino-acid sequence, 115 residues long: Large ribosomal subunit protein bL19 (115 aa).

Belongs to the bacterial ribosomal protein bL19 family.

Functionally, this protein is located at the 30S-50S ribosomal subunit interface and may play a role in the structure and function of the aminoacyl-tRNA binding site. The sequence is that of Large ribosomal subunit protein bL19 from Desulforamulus reducens (strain ATCC BAA-1160 / DSM 100696 / MI-1) (Desulfotomaculum reducens).